A 336-amino-acid chain; its full sequence is Ephrin-B2 (336 aa).

An N-terminal signal peptide occupies residues Met1–Ser28. Residues Arg29–Ala232 lie on the Extracellular side of the membrane. Residues Ile31–Val167 form the Ephrin RBD domain. Residue Asn39 is glycosylated (N-linked (GlcNAc...) asparagine). Intrachain disulfides connect Cys65–Cys104 and Cys92–Cys156. Residue Asn142 is glycosylated (N-linked (GlcNAc...) asparagine). The tract at residues Asp170–Ala216 is disordered. The segment covering Asn193 to Ala216 has biased composition (polar residues). Residues Gly233–Leu253 form a helical membrane-spanning segment. Residues Lys254 to Val336 lie on the Cytoplasmic side of the membrane. Ser263 is subject to Phosphoserine. Phosphothreonine is present on Thr277. Omega-N-methylarginine is present on Arg280. Residues Tyr334 to Val336 carry the PDZ-binding motif.

This sequence belongs to the ephrin family. As to quaternary structure, interacts with PDZRN3. Binds to the ephrin receptor EPHA3, EPHA4 and EPHB4. Inducible phosphorylation of tyrosine residues in the cytoplasmic domain. Expressed in inner and outer pillar cells of the organ of Corti (at protein level). Expressed on lateral floor plate cells, specifically on commissural axon segments that have passed through the floor plate. Expressed in cells of the retinal ganglion cell layer during retinal axon guidance to the optic disk. Expressed in myogenic progenitor cells.

It localises to the cell membrane. The protein resides in the cell junction. The protein localises to the adherens junction. Its function is as follows. Cell surface transmembrane ligand for Eph receptors, a family of receptor tyrosine kinases which are crucial for migration, repulsion and adhesion during neuronal, vascular and epithelial development. Binds promiscuously Eph receptors residing on adjacent cells, leading to contact-dependent bidirectional signaling into neighboring cells. The signaling pathway downstream of the receptor is referred to as forward signaling while the signaling pathway downstream of the ephrin ligand is referred to as reverse signaling. Binds to receptor tyrosine kinase including EPHA4, EPHA3 and EPHB4. Together with EPHB4 plays a central role in heart morphogenesis and angiogenesis through regulation of cell adhesion and cell migration. EPHB4-mediated forward signaling controls cellular repulsion and segregation from EFNB2-expressing cells. May play a role in constraining the orientation of longitudinally projecting axons. The sequence is that of Ephrin-B2 (Efnb2) from Mus musculus (Mouse).